The sequence spans 122 residues: Large ribosomal subunit protein uL14 (122 aa).

The protein belongs to the universal ribosomal protein uL14 family. As to quaternary structure, part of the 50S ribosomal subunit. Forms a cluster with proteins L3 and L19. In the 70S ribosome, L14 and L19 interact and together make contacts with the 16S rRNA in bridges B5 and B8.

In terms of biological role, binds to 23S rRNA. Forms part of two intersubunit bridges in the 70S ribosome. This chain is Large ribosomal subunit protein uL14, found in Malacoplasma penetrans (strain HF-2) (Mycoplasma penetrans).